The chain runs to 435 residues: ATP-dependent protease ATPase subunit HslU (435 aa).

Residues Val-18, Gly-60–Glu-65, Asp-248, Glu-313, and Arg-385 each bind ATP.

Belongs to the ClpX chaperone family. HslU subfamily. As to quaternary structure, a double ring-shaped homohexamer of HslV is capped on each side by a ring-shaped HslU homohexamer. The assembly of the HslU/HslV complex is dependent on binding of ATP.

The protein resides in the cytoplasm. Its function is as follows. ATPase subunit of a proteasome-like degradation complex; this subunit has chaperone activity. The binding of ATP and its subsequent hydrolysis by HslU are essential for unfolding of protein substrates subsequently hydrolyzed by HslV. HslU recognizes the N-terminal part of its protein substrates and unfolds these before they are guided to HslV for hydrolysis. This is ATP-dependent protease ATPase subunit HslU from Parvibaculum lavamentivorans (strain DS-1 / DSM 13023 / NCIMB 13966).